The chain runs to 373 residues: Cyclin-A3-1 (373 aa).

Residues 50–80 (AVVLKPQPAPRGGKRAASHAAEPKKPAPPPA) form a disordered region.

It belongs to the cyclin family. Cyclin AB subfamily.

In Oryza sativa subsp. japonica (Rice), this protein is Cyclin-A3-1 (CYCA3-1).